A 511-amino-acid polypeptide reads, in one-letter code: MWILLGIAVLIMTLVWDNSRKQWRVNTFEKSRILGPFTIPIVGNGLQALTLRPENFIQRFGDYFNKYGKTFRLWILGECLIYTKDLKYFESILSSSTLLKKAHLYRFLRDFLGDGLLLSTGNKWTSRRKVLAPAFHFKCLENFVEIMDRNSGIMVEKLKNYADGKTCVDLFKFVSLEALDVTTETAMGVQVNAQNEPNFPYTKALKSVVYIESKRLASVSMRYNWLFPLAAPLVYRRLQKDIAIMQDFTDKVIRERRAILERARADGTYKPLIMGDDDIGGKAKMTLLDILLQATIDNKPLSDVDIREEVDVFIFAGDDTTTSGVSHALHAISRHPKVQECIYEELVSVLGPDPDASVTQTKLLELKYLDCVIKETMRLHPPVPILGRYIPEDLKIGEITIPGNTSILLMPYYVYRDPEYFPDPLVFKPERWMDMKTTSNTPPLAYIPFSSGPKNCIGQKFANLQMKALISKVIRHYELLPLGADLKATYTFILSSSTGNNVGLKPRTRVK.

Cys-456 is a binding site for heme.

Belongs to the cytochrome P450 family. Heme serves as cofactor.

Its subcellular location is the endoplasmic reticulum membrane. The protein localises to the microsome membrane. May be involved in the metabolism of insect hormones and in the breakdown of synthetic insecticides. In Drosophila melanogaster (Fruit fly), this protein is Probable cytochrome P450 4d21 (Cyp4d21).